The primary structure comprises 448 residues: MWHWHRFQEHEARRSDAIVLLRKIMSNESKSNSLYAFESLESNVRFYSRSFPVVFEKAAGAILHDESGREFIDFLSGSGVLNYGHNDPYFLDEATQYLRSNGIIHGLDMATPAKREFMECFDAIILRPRGLTYKFQFCGPTGANAVEAALKLARKATGRHSIVSFTNGFHGMSLGALAVTGNRYYRDAAGFPPAGVAFMPYDGYWGADNDTSEYLDKVLADASSGVDVPAAIILETVQGEGGINAARKEWLQSIQRICRSHGILLIVDDIQAGCGRAGNFFSFEFAGLSPDVVVLSKSISGCGLPLSLLLLKPELDVWRPGEHNGTFRGNNLAFVTGAAALRKYWTNDALSARVMETGRIIAERLRQVAQTNRARSLSVRGRGMMLGLNCGTGKLAERIVRKAFEEGLVVERCGAEDQVIKLLPPLTTDEQTLRRGLDILHKSVAASI.

Lys297 carries the post-translational modification N6-(pyridoxal phosphate)lysine.

It belongs to the class-III pyridoxal-phosphate-dependent aminotransferase family. Pyridoxal 5'-phosphate is required as a cofactor.

This is an uncharacterized protein from Sinorhizobium fredii (strain NBRC 101917 / NGR234).